Consider the following 543-residue polypeptide: MAKELVFGKNARNKLLAGINKLADAVKVTVGPKGQNVILGRKFSNPLITNDGVTIAKEIELTDPLENIGAKVISVAAVSTNDIAGDGTTTATILAQEMTNRGVEAVNNGANPVNVRRGIEDASQLIITELDKRSKKINTNEEIEQVAAISSGSKEIGKLIAQAMALVGKNGVITTDDAKTINTTLETTEGIEFKGTYASPYMVSDQEKMEVVLDQPKILVSAMKINTIKEILPLLEGSMENGNPLLIVAPDFAEEVVTTLAVNKLRGTINVVAVKCNEYGERQKAALEDLAISTGTLAYNNELGGGFKDVTVNHLGEARRVQVAKEKTTVIGGKGSKETIQKHLDLLNGRLKQTTEKYDTDLLKERIAHLSQGVAVVRVGGATELAQKELKLRIEDALNSTKAAVEEGIISGGGIALLNVSTILNDSKLADKYKAETSAENLKEILVGYEIVRKSLEAPVRQIIENSGVNPVKVFAELRSEADGVGFDAETKKKVDMIRSGIIDPTKVTKTALEKAASVASSLITTSVAVYDIKENKEGSFQE.

ATP contacts are provided by residues 29-32 (TVGP), 86-90 (DGTTT), G413, and D504.

This sequence belongs to the chaperonin (HSP60) family. In terms of assembly, forms a cylinder of 14 subunits composed of two heptameric rings stacked back-to-back. Interacts with the co-chaperonin GroES.

It localises to the cytoplasm. It catalyses the reaction ATP + H2O + a folded polypeptide = ADP + phosphate + an unfolded polypeptide.. Its function is as follows. Together with its co-chaperonin GroES, plays an essential role in assisting protein folding. The GroEL-GroES system forms a nano-cage that allows encapsulation of the non-native substrate proteins and provides a physical environment optimized to promote and accelerate protein folding. The protein is Chaperonin GroEL of Mycoplasma pneumoniae (strain ATCC 29342 / M129 / Subtype 1) (Mycoplasmoides pneumoniae).